The primary structure comprises 419 residues: UDP-N-acetylglucosamine 1-carboxyvinyltransferase (419 aa).

Lys-22–Asn-23 is a phosphoenolpyruvate binding site. Position 93 (Arg-93) interacts with UDP-N-acetyl-alpha-D-glucosamine. Residue Cys-117 is the Proton donor of the active site. Cys-117 is subject to 2-(S-cysteinyl)pyruvic acid O-phosphothioketal. UDP-N-acetyl-alpha-D-glucosamine-binding residues include Asp-306 and Ile-328.

The protein belongs to the EPSP synthase family. MurA subfamily.

Its subcellular location is the cytoplasm. The catalysed reaction is phosphoenolpyruvate + UDP-N-acetyl-alpha-D-glucosamine = UDP-N-acetyl-3-O-(1-carboxyvinyl)-alpha-D-glucosamine + phosphate. Its pathway is cell wall biogenesis; peptidoglycan biosynthesis. Functionally, cell wall formation. Adds enolpyruvyl to UDP-N-acetylglucosamine. The polypeptide is UDP-N-acetylglucosamine 1-carboxyvinyltransferase (Vesicomyosocius okutanii subsp. Calyptogena okutanii (strain HA)).